Here is a 359-residue protein sequence, read N- to C-terminus: 3-dehydroquinate synthase (359 aa).

NAD(+)-binding positions include Asp-71 to Lys-76, Gly-105 to Asp-109, Thr-129 to Thr-130, Lys-142, and Lys-151. Glu-184, His-247, and His-264 together coordinate Zn(2+).

Belongs to the sugar phosphate cyclases superfamily. Dehydroquinate synthase family. Co(2+) serves as cofactor. The cofactor is Zn(2+). It depends on NAD(+) as a cofactor.

It localises to the cytoplasm. The enzyme catalyses 7-phospho-2-dehydro-3-deoxy-D-arabino-heptonate = 3-dehydroquinate + phosphate. It participates in metabolic intermediate biosynthesis; chorismate biosynthesis; chorismate from D-erythrose 4-phosphate and phosphoenolpyruvate: step 2/7. Its function is as follows. Catalyzes the conversion of 3-deoxy-D-arabino-heptulosonate 7-phosphate (DAHP) to dehydroquinate (DHQ). The sequence is that of 3-dehydroquinate synthase from Burkholderia cenocepacia (strain ATCC BAA-245 / DSM 16553 / LMG 16656 / NCTC 13227 / J2315 / CF5610) (Burkholderia cepacia (strain J2315)).